Reading from the N-terminus, the 270-residue chain is NAD kinase (270 aa).

Catalysis depends on aspartate 63, which acts as the Proton acceptor. Residues 63–64 (DG), arginine 68, 131–132 (NE), lysine 142, arginine 159, aspartate 161, 172–177 (TAYAMS), alanine 196, and glutamine 230 contribute to the NAD(+) site.

The protein belongs to the NAD kinase family. A divalent metal cation serves as cofactor.

It localises to the cytoplasm. It carries out the reaction NAD(+) + ATP = ADP + NADP(+) + H(+). Involved in the regulation of the intracellular balance of NAD and NADP, and is a key enzyme in the biosynthesis of NADP. Catalyzes specifically the phosphorylation on 2'-hydroxyl of the adenosine moiety of NAD to yield NADP. This chain is NAD kinase, found in Methanoregula boonei (strain DSM 21154 / JCM 14090 / 6A8).